Reading from the N-terminus, the 118-residue chain is Aspartate 1-decarboxylase (118 aa).

S25 serves as the catalytic Schiff-base intermediate with substrate; via pyruvic acid. S25 carries the pyruvic acid (Ser) modification. T57 serves as a coordination point for substrate. The active-site Proton donor is the Y58. G73–A75 provides a ligand contact to substrate.

This sequence belongs to the PanD family. Heterooctamer of four alpha and four beta subunits. Pyruvate is required as a cofactor. Is synthesized initially as an inactive proenzyme, which is activated by self-cleavage at a specific serine bond to produce a beta-subunit with a hydroxyl group at its C-terminus and an alpha-subunit with a pyruvoyl group at its N-terminus.

The protein localises to the cytoplasm. It catalyses the reaction L-aspartate + H(+) = beta-alanine + CO2. It participates in cofactor biosynthesis; (R)-pantothenate biosynthesis; beta-alanine from L-aspartate: step 1/1. Functionally, catalyzes the pyruvoyl-dependent decarboxylation of aspartate to produce beta-alanine. The protein is Aspartate 1-decarboxylase of Hyphomonas neptunium (strain ATCC 15444).